Consider the following 202-residue polypeptide: Large ribosomal subunit protein bL17 (202 aa).

The segment at 148 to 202 is disordered; it reads DEAPAAESTDAAQVEAGGVEQPDTLPDADAPATADEGVEVDAAEVDPSDEKKDQA. Residues 169-182 show a composition bias toward low complexity; it reads PDTLPDADAPATAD. The span at 183–194 shows a compositional bias: acidic residues; it reads EGVEVDAAEVDP.

It belongs to the bacterial ribosomal protein bL17 family. As to quaternary structure, part of the 50S ribosomal subunit. Contacts protein L32.

This chain is Large ribosomal subunit protein bL17, found in Kineococcus radiotolerans (strain ATCC BAA-149 / DSM 14245 / SRS30216).